The chain runs to 328 residues: D-alanine--D-alanine ligase (328 aa).

Residues 118–317 form the ATP-grasp domain; sequence LSVLTKFNIP…MPQMLDNEIT (200 aa). ATP is bound at residue 146–201; sequence KKALGLPFFVKPNQSGSSLGVSKVDALDQLEKALEFAFAEDNEILIESYLNGTEVS. 3 residues coordinate Mg(2+): aspartate 272, glutamate 284, and asparagine 286.

Belongs to the D-alanine--D-alanine ligase family. Mg(2+) serves as cofactor. Mn(2+) is required as a cofactor.

It is found in the cytoplasm. It catalyses the reaction 2 D-alanine + ATP = D-alanyl-D-alanine + ADP + phosphate + H(+). Its pathway is cell wall biogenesis; peptidoglycan biosynthesis. Its function is as follows. Cell wall formation. This Flavobacterium psychrophilum (strain ATCC 49511 / DSM 21280 / CIP 103535 / JIP02/86) protein is D-alanine--D-alanine ligase.